Consider the following 3388-residue polypeptide: Genome polyprotein (3388 aa).

Residues 1–15 (MNDQRKKARNTPFNM) form an interaction with host EXOC1 region. Residues 1-101 (MNDQRKKARN…LNILNRRRRT (101 aa)) lie on the Cytoplasmic side of the membrane. Residues 37–72 (MLQGRGPLKLFMALVAFLRFLTIPPTAGILKRWGTI) are hydrophobic; homodimerization of capsid protein C. Positions 101–114 (TAGMIIMLIPTVMA) are cleaved as a propeptide — ER anchor for the capsid protein C, removed in mature form by serine protease NS3. The chain crosses the membrane as a helical span at residues 102–122 (AGMIIMLIPTVMAFHLTTRNG). Residues 123 to 238 (EPHMIVSRQE…GAWKHAQRIE (116 aa)) lie on the Extracellular side of the membrane. A glycan (N-linked (GlcNAc...) asparagine; by host) is linked at N183. A helical transmembrane segment spans residues 239–259 (TWILRHPGFTIMAAILAYTIG). Topologically, residues 260 to 265 (TTHFQR) are cytoplasmic. A helical membrane pass occupies residues 266–280 (VLIFILLTAIAPSMT). Topologically, residues 281-725 (MRCIGISNRD…LHQVFGAIYG (445 aa)) are extracellular. 4 disulfide bridges follow: C283–C310, C340–C401, C354–C385, and C372–C396. N347 carries N-linked (GlcNAc...) asparagine; by host glycosylation. The interval 378–391 (DRGWGNGCGLFGKG) is fusion peptide. The N-linked (GlcNAc...) asparagine; by host glycan is linked to N433. 2 disulfides stabilise this stretch: C465–C565 and C582–C613. Residues 726–746 (AAFSGVSWTMKILIGVIITWI) traverse the membrane as a helical segment. The Cytoplasmic portion of the chain corresponds to 747 to 752 (GMNSRS). The helical transmembrane segment at 753-773 (TSLSVSLVLVGIVTLYLGVMV) threads the bilayer. Topologically, residues 774–1195 (QADSGCVVSW…MVGATMTDDI (422 aa)) are extracellular. Intrachain disulfides connect C779/C790, C830/C918, C954/C998, C1055/C1104, C1066/C1088, and C1087/C1091. N-linked (GlcNAc...) asparagine; by host glycans are attached at residues N905 and N982. N-linked (GlcNAc...) asparagine; by host glycosylation is present at N1134. A helical membrane pass occupies residues 1196-1220 (GMGVTYLALLAAFKVRPTFAAGLLL). The Cytoplasmic segment spans residues 1221-1226 (RKLTSK). A helical membrane pass occupies residues 1227-1245 (ELMMTTIGIVLLSQSSIPE). Residues 1246-1269 (TILELTDALALGMMVLKMVRNMEK) lie on the Lumenal side of the membrane. A helical membrane pass occupies residues 1270-1290 (YQLAVTIMAILCVPNAVILQN). A1291 is a topological domain (cytoplasmic). Residues 1292–1310 (WKVSCTILAVVSVSPLFLT) form a helical membrane-spanning segment. Residues 1311–1317 (SSQQKAD) are Lumenal-facing. A helical transmembrane segment spans residues 1318-1338 (WIPLALTIKGLNPTAIFLTTL). The Cytoplasmic segment spans residues 1339–1346 (SRTSKKRS). Residues 1347–1367 (WPLNEAIMAVGMVSILASSLL) form a helical membrane-spanning segment. Residues 1368–1370 (KND) are Lumenal-facing. The helical transmembrane segment at 1371–1391 (TPMTGPLVAGGLLTVCYVLTG) threads the bilayer. At 1392-1447 (RSADLELERATDVKWDDQAEISGSSPILSITISEDGSMSIKNEEEEQTLTILIRTG) the chain is on the cytoplasmic side. The interacts with and activates NS3 protease stretch occupies residues 1398–1437 (LERATDVKWDDQAEISGSSPILSITISEDGSMSIKNEEEE). The segment at residues 1448-1468 (LLVISGLFPVSIPITAAAWYL) is an intramembrane region (helical). Residues 1469–2144 (WEVKKQRAGV…LSELPETLET (676 aa)) lie on the Cytoplasmic side of the membrane. Residues 1476–1653 (AGVLWDVPSP…EKSIEDNPEI (178 aa)) enclose the Peptidase S7 domain. Active-site charge relay system; for serine protease NS3 activity residues include H1526, D1550, and S1610. Residues 1655-1811 (DDIFRKRRLT…QSNAPIMDEE (157 aa)) enclose the Helicase ATP-binding domain. Residues 1659-1662 (RKRR) form an important for RNA-binding region. 1668 to 1675 (LHPGAGKT) contributes to the ATP binding site. Residues 1759–1762 (DEAH) carry the DEAH box motif. The Helicase C-terminal domain maps to 1821–1988 (SGHEWVTDFK…IIPSMFEPER (168 aa)). K1863 is modified (N6-acetyllysine; by host). A helical membrane pass occupies residues 2145–2165 (LLLLTLLATVTGGIFLFLMSG). The Lumenal segment spans residues 2166–2167 (RG). Positions 2168–2188 (IGKMTLGMCCIITASILLWYA) form an intramembrane region, helical. Position 2189 (Q2189) is a topological domain, lumenal. Residues 2190–2210 (IQPHWIAASIILEFFLIVLLI) form a helical membrane-spanning segment. Topologically, residues 2211 to 2225 (PEPEKQRTPQDNQLT) are cytoplasmic. Residues 2226–2246 (YVIIAILTVVAATMANEMGFL) form a helical membrane-spanning segment. The Lumenal portion of the chain corresponds to 2247–2271 (EKTKKDLGLGNIATQQPESNILDID). The segment at residues 2272–2292 (LRPASAWTLYAVATTFITPML) is an intramembrane region (helical). The Lumenal segment spans residues 2293-2313 (RHSIENSSVNVSLTAIANQAT). 2 N-linked (GlcNAc...) asparagine; by host glycosylation sites follow: N2298 and N2302. An intramembrane region (helical) is located at residues 2314–2334 (VLMGLGKGWPLSKMDIGVPLL). Over 2335–2344 (AIGCYSQVNP) the chain is Lumenal. The chain crosses the membrane as a helical span at residues 2345–2365 (ITLTAALLLLVAHYAIIGPGL). The Cytoplasmic segment spans residues 2366–2410 (QAKATREAQKRAAAGIMKNPTVDGITVIDLDPIPYDPKFEKQLGQ). Residues 2411 to 2431 (VMLLVLCVTQVLMMRTTWALC) traverse the membrane as a helical segment. The Lumenal portion of the chain corresponds to 2432 to 2456 (EALTLATGPVSTLWEGNPGRFWNTT). N-linked (GlcNAc...) asparagine; by host glycosylation occurs at N2454. The helical transmembrane segment at 2457 to 2477 (IAVSMANIFRGSYLAGAGLLF) threads the bilayer. Residues 2478–3388 (SIMKNTTSTR…REEEEAGVLW (911 aa)) lie on the Cytoplasmic side of the membrane. An mRNA cap 0-1 NS5-type MT domain is found at 2490-2752 (TGNIGETLGE…DVDLGSGTRN (263 aa)). S2544 is a binding site for S-adenosyl-L-methionine. A Phosphoserine modification is found at S2544. K2549 functions as the For 2'-O-MTase activity in the catalytic mechanism. The SUMO-interacting motif motif lies at 2565-2568 (VVDL). 6 residues coordinate S-adenosyl-L-methionine: G2574, W2575, T2592, K2593, D2619, and V2620. D2634 acts as the For 2'-O-MTase activity in catalysis. Residue I2635 coordinates S-adenosyl-L-methionine. Catalysis depends on for 2'-O-MTase activity residues K2669 and E2705. An S-adenosyl-L-methionine-binding site is contributed by Y2707. Residues E2926, H2930, C2935, and C2938 each coordinate Zn(2+). Positions 3017–3166 (AMYADDTAGW…PLDDRFARAL (150 aa)) constitute a RdRp catalytic domain. Zn(2+) is bound by residues H3200, C3216, and C3335.

In the N-terminal section; belongs to the class I-like SAM-binding methyltransferase superfamily. mRNA cap 0-1 NS5-type methyltransferase family. As to quaternary structure, homodimer. Interacts (via N-terminus) with host EXOC1 (via C-terminus); this interaction results in EXOC1 degradation through the proteasome degradation pathway. In terms of assembly, forms heterodimers with envelope protein E in the endoplasmic reticulum and Golgi. Homodimer; in the endoplasmic reticulum and Golgi. Interacts with protein prM. Interacts with non-structural protein 1. As to quaternary structure, homodimer; Homohexamer when secreted. Interacts with envelope protein E. Interacts with host PRKAA1. In terms of assembly, interacts (via N-terminus) with serine protease NS3. Forms a heterodimer with serine protease NS3. May form homooligomers. As to quaternary structure, forms a heterodimer with NS2B. Interacts with NS4B. Interacts with unphosphorylated RNA-directed RNA polymerase NS5; this interaction stimulates RNA-directed RNA polymerase NS5 guanylyltransferase activity. Interacts with host SHFL. In terms of assembly, interacts with host MAVS; this interaction inhibits the synthesis of IFN-beta. Interacts with host SHFL. Interacts with host AUP1; the interaction occurs in the presence of Dengue virus NS4B and induces lipophagy which facilitates production of virus progeny particles. May interact with host SRPRA and SEC61G. Interacts with serine protease NS3. As to quaternary structure, homodimer. Interacts with host STAT2; this interaction inhibits the phosphorylation of the latter, and, when all viral proteins are present (polyprotein), targets STAT2 for degradation. Interacts with serine protease NS3. Interacts with host PAF1 complex; the interaction may prevent the recruitment of the PAF1 complex to interferon-responsive genes, and thus reduces the immune response. In terms of processing, specific enzymatic cleavages in vivo yield mature proteins. Cleavages in the lumen of endoplasmic reticulum are performed by host signal peptidase, whereas cleavages in the cytoplasmic side are performed by serine protease NS3. Signal cleavage at the 2K-4B site requires a prior NS3 protease-mediated cleavage at the 4A-2K site. Cleaved in post-Golgi vesicles by a host furin, releasing the mature small envelope protein M, and peptide pr. This cleavage is incomplete as up to 30% of viral particles still carry uncleaved prM. Post-translationally, N-glycosylated. In terms of processing, N-glycosylated. The excreted form is glycosylated and this is required for efficient secretion of the protein from infected cells. Acetylated by host KAT5. Acetylation modulates NS3 RNA-binding and unwinding activities and plays an important positive role for viral replication. Post-translationally, sumoylation of RNA-directed RNA polymerase NS5 increases NS5 protein stability allowing proper viral RNA replication. In terms of processing, phosphorylated on serines residues. This phosphorylation may trigger NS5 nuclear localization.

It localises to the virion. Its subcellular location is the host nucleus. It is found in the host cytoplasm. The protein localises to the host perinuclear region. The protein resides in the secreted. It localises to the virion membrane. Its subcellular location is the host endoplasmic reticulum membrane. It is found in the host mitochondrion. The enzyme catalyses Selective hydrolysis of -Xaa-Xaa-|-Yaa- bonds in which each of the Xaa can be either Arg or Lys and Yaa can be either Ser or Ala.. The catalysed reaction is RNA(n) + a ribonucleoside 5'-triphosphate = RNA(n+1) + diphosphate. It carries out the reaction a ribonucleoside 5'-triphosphate + H2O = a ribonucleoside 5'-diphosphate + phosphate + H(+). It catalyses the reaction ATP + H2O = ADP + phosphate + H(+). The enzyme catalyses a 5'-end (5'-triphosphoguanosine)-ribonucleoside in mRNA + S-adenosyl-L-methionine = a 5'-end (N(7)-methyl 5'-triphosphoguanosine)-ribonucleoside in mRNA + S-adenosyl-L-homocysteine. The catalysed reaction is a 5'-end (N(7)-methyl 5'-triphosphoguanosine)-ribonucleoside in mRNA + S-adenosyl-L-methionine = a 5'-end (N(7)-methyl 5'-triphosphoguanosine)-(2'-O-methyl-ribonucleoside) in mRNA + S-adenosyl-L-homocysteine + H(+). Plays a role in virus budding by binding to the cell membrane and gathering the viral RNA into a nucleocapsid that forms the core of a mature virus particle. During virus entry, may induce genome penetration into the host cytoplasm after hemifusion induced by the surface proteins. Can migrate to the cell nucleus where it modulates host functions. Overcomes the anti-viral effects of host EXOC1 by sequestering and degrading the latter through the proteasome degradation pathway. In terms of biological role, inhibits RNA silencing by interfering with host Dicer. Its function is as follows. Prevents premature fusion activity of envelope proteins in trans-Golgi by binding to envelope protein E at pH6.0. After virion release in extracellular space, gets dissociated from E dimers. Functionally, acts as a chaperone for envelope protein E during intracellular virion assembly by masking and inactivating envelope protein E fusion peptide. prM is the only viral peptide matured by host furin in the trans-Golgi network probably to avoid catastrophic activation of the viral fusion activity in acidic Golgi compartment prior to virion release. prM-E cleavage is inefficient, and many virions are only partially matured. These uncleaved prM would play a role in immune evasion. May play a role in virus budding. Exerts cytotoxic effects by activating a mitochondrial apoptotic pathway through M ectodomain. May display a viroporin activity. In terms of biological role, binds to host cell surface receptor and mediates fusion between viral and cellular membranes. Envelope protein is synthesized in the endoplasmic reticulum in the form of heterodimer with protein prM. They play a role in virion budding in the ER, and the newly formed immature particle is covered with 60 spikes composed of heterodimer between precursor prM and envelope protein E. The virion is transported to the Golgi apparatus where the low pH causes dissociation of PrM-E heterodimers and formation of E homodimers. prM-E cleavage is inefficient, and many virions are only partially matured. These uncleaved prM would play a role in immune evasion. Its function is as follows. Involved in immune evasion, pathogenesis and viral replication. Once cleaved off the polyprotein, is targeted to three destinations: the viral replication cycle, the plasma membrane and the extracellular compartment. Essential for viral replication. Required for formation of the replication complex and recruitment of other non-structural proteins to the ER-derived membrane structures. Excreted as a hexameric lipoparticle that plays a role against host immune response. Antagonizing the complement function. Binds to the host macrophages and dendritic cells. Inhibits signal transduction originating from Toll-like receptor 3 (TLR3). Mediates complement activation, which may contribute to the pathogenesis of the vascular leakage that occurs in severe dengue disease. Activates autophagy through the AMPK/ERK/mTOR signaling pathway. Mechanistically, acts as the assembly platform for STK11-AMPK interactions and promotes STK11-AMPK interactions. In turn, promotes phosphorylation of the AMPK kinase structural domain and activates AMPK, thereby positively regulating the AMPK/ERK/mTOR signaling pathway and inducing autophagy. Functionally, disrupts the host endothelial glycocalyx layer of host pulmonary microvascular endothelial cells, inducing degradation of sialic acid and shedding of heparan sulfate proteoglycans. NS1 induces expression of sialidases, heparanase, and activates cathepsin L, which activates heparanase via enzymatic cleavage. These effects are probably linked to the endothelial hyperpermeability observed in severe dengue disease. Component of the viral RNA replication complex that functions in virion assembly and antagonizes the host immune response. In terms of biological role, required cofactor for the serine protease function of NS3. May have membrane-destabilizing activity and form viroporins. Its function is as follows. Displays three enzymatic activities: serine protease, NTPase and RNA helicase. NS3 serine protease, in association with NS2B, performs its autocleavage and cleaves the polyprotein at dibasic sites in the cytoplasm: C-prM, NS2A-NS2B, NS2B-NS3, NS3-NS4A, NS4A-2K and NS4B-NS5. NS3 RNA helicase binds RNA and unwinds dsRNA in the 3' to 5' direction. Functionally, regulates the ATPase activity of the NS3 helicase activity. NS4A allows NS3 helicase to conserve energy during unwinding. Plays a role in the inhibition of the host innate immune response. Interacts with host MAVS and thereby prevents the interaction between RIGI and MAVS. In turn, IFN-beta production is impaired. Interacts with host AUP1 which mediates induction of lipophagy in host cells and facilitates production of virus progeny particles. Functions as a signal peptide for NS4B and is required for the interferon antagonism activity of the latter. In terms of biological role, induces the formation of ER-derived membrane vesicles where the viral replication takes place. Inhibits interferon (IFN)-induced host STAT1 phosphorylation and nuclear translocation, thereby preventing the establishment of cellular antiviral state by blocking the IFN-alpha/beta pathway. Its function is as follows. Replicates the viral (+) and (-) RNA genome, and performs the capping of genomes in the cytoplasm. NS5 methylates viral RNA cap at guanine N-7 and ribose 2'-O positions. Besides its role in RNA genome replication, also prevents the establishment of cellular antiviral state by blocking the interferon-alpha/beta (IFN-alpha/beta) signaling pathway. Inhibits host TYK2 and STAT2 phosphorylation, thereby preventing activation of JAK-STAT signaling pathway. May reduce immune responses by preventing the recruitment of the host PAF1 complex to interferon-responsive genes. This is Genome polyprotein from Aedimorphus (Red guenon).